The sequence spans 92 residues: Small ribosomal subunit protein uS19 (92 aa).

It belongs to the universal ribosomal protein uS19 family.

Its function is as follows. Protein S19 forms a complex with S13 that binds strongly to the 16S ribosomal RNA. The polypeptide is Small ribosomal subunit protein uS19 (rpsS) (Rickettsia prowazekii (strain Madrid E)).